We begin with the raw amino-acid sequence, 613 residues long: tRNA 5-methylaminomethyl-2-thiouridine biosynthesis bifunctional protein MnmC (613 aa).

The interval 1-225 (MKKAKLIFKD…KREMIKAYLE (225 aa)) is tRNA (mnm(5)s(2)U34)-methyltransferase. The FAD-dependent cmnm(5)s(2)U34 oxidoreductase stretch occupies residues 252–613 (IGAGISSAVL…FLIRKLKKGL (362 aa)).

In the N-terminal section; belongs to the methyltransferase superfamily. tRNA (mnm(5)s(2)U34)-methyltransferase family. It in the C-terminal section; belongs to the DAO family. FAD serves as cofactor.

Its subcellular location is the cytoplasm. The catalysed reaction is 5-aminomethyl-2-thiouridine(34) in tRNA + S-adenosyl-L-methionine = 5-methylaminomethyl-2-thiouridine(34) in tRNA + S-adenosyl-L-homocysteine + H(+). Its function is as follows. Catalyzes the last two steps in the biosynthesis of 5-methylaminomethyl-2-thiouridine (mnm(5)s(2)U) at the wobble position (U34) in tRNA. Catalyzes the FAD-dependent demodification of cmnm(5)s(2)U34 to nm(5)s(2)U34, followed by the transfer of a methyl group from S-adenosyl-L-methionine to nm(5)s(2)U34, to form mnm(5)s(2)U34. The polypeptide is tRNA 5-methylaminomethyl-2-thiouridine biosynthesis bifunctional protein MnmC (Campylobacter jejuni subsp. jejuni serotype O:6 (strain 81116 / NCTC 11828)).